The primary structure comprises 527 residues: N-acetylglutamate synthase, mitochondrial (527 aa).

A mitochondrion-targeting transit peptide spans 1–39 (MAKVNSGSSGCRAMVMAGQFWTKPFALSSQRSGPHRRSA). A disordered region spans residues 28-65 (SSQRSGPHRRSAAEVNRRMSSSRTAGHGSKTPLWSQQE). A may stabilize the oligomeric structure region spans residues 40 to 83 (AEVNRRMSSSRTAGHGSKTPLWSQQESYNHSSLGERSAWSNRTL). Residues 40–361 (AEVNRRMSSS…SGTLFKNGDP (322 aa)) form an amino-acid kinase domain (AAK) region. The region spanning 360-511 (DPIRRYSSLE…FAKSHPDSFC (152 aa)) is the N-acetyltransferase domain. Residues K386, K429, and 459-464 (RSRTTN) contribute to the substrate site.

Belongs to the acetyltransferase family. As to quaternary structure, homodimer. Homotetramer.

It is found in the mitochondrion matrix. The enzyme catalyses L-glutamate + acetyl-CoA = N-acetyl-L-glutamate + CoA + H(+). Inhibited by L-arginine. In terms of biological role, plays a role in the regulation of ureagenesis by producing the essential cofactor N-acetylglutamate (NAG), thus modulating carbamoylphosphate synthase I (cps1) activity. The sequence is that of N-acetylglutamate synthase, mitochondrial from Danio rerio (Zebrafish).